Reading from the N-terminus, the 332-residue chain is DNA-directed RNA polymerase subunit alpha (332 aa).

The segment at 1–234 is alpha N-terminal domain (alpha-NTD); it reads MIEYVIPKKL…NHLQIITDSL (234 aa). An alpha C-terminal domain (alpha-CTD) region spans residues 264–332; the sequence is AVYSKKIDEL…KFGLSLKKGG (69 aa).

Belongs to the RNA polymerase alpha chain family. In terms of assembly, homodimer. The RNAP catalytic core consists of 2 alpha, 1 beta, 1 beta' and 1 omega subunit. When a sigma factor is associated with the core the holoenzyme is formed, which can initiate transcription.

The enzyme catalyses RNA(n) + a ribonucleoside 5'-triphosphate = RNA(n+1) + diphosphate. Its function is as follows. DNA-dependent RNA polymerase catalyzes the transcription of DNA into RNA using the four ribonucleoside triphosphates as substrates. In Pseudothermotoga lettingae (strain ATCC BAA-301 / DSM 14385 / NBRC 107922 / TMO) (Thermotoga lettingae), this protein is DNA-directed RNA polymerase subunit alpha.